The chain runs to 278 residues: Phosphonates import ATP-binding protein PhnC (278 aa).

Positions 25–273 (LAVKGLVKAY…IIQDIYSDES (249 aa)) constitute an ABC transporter domain. 58–65 (GRSGAGKS) is an ATP binding site.

Belongs to the ABC transporter superfamily. Phosphonates importer (TC 3.A.1.9.1) family. As to quaternary structure, the complex is composed of two ATP-binding proteins (PhnC), two transmembrane proteins (PhnE) and a solute-binding protein (PhnD).

The protein localises to the cell inner membrane. The enzyme catalyses phosphonate(out) + ATP + H2O = phosphonate(in) + ADP + phosphate + H(+). Functionally, part of the ABC transporter complex PhnCDE involved in phosphonates import. Responsible for energy coupling to the transport system. The protein is Phosphonates import ATP-binding protein PhnC of Yersinia pestis bv. Antiqua (strain Antiqua).